Reading from the N-terminus, the 324-residue chain is MRHDYRMSEVEVAGGTAPVLRGRFLYNEPMSRHVSWRAGGSARRLYVPADLEDLVWLVRSVPADEAIHMVGLGSNLLVRDGGVAGVVILLHGVLTKLALESRTHGLPPAPPARDTAVVYAQAGVASPKLARFAATHGLVGGEFLAGIPGTVGGAIAMNAGCYGSETWDTLVQLHTLDRQGQLNERLPEEYVTGYRHAALKRPHEEWFIGGWFRLERGDGAASRERIRSLLKTRIASQPLNLPNAGSVFRNPPGDFAARLIEACGLKGHRIGDAQVSTKHANFIVNVGKATATDIERLIEHVEDSVEARTNVRLMREVRIIGERQ.

Residues 38–231 (AGGSARRLYV…SRERIRSLLK (194 aa)) enclose the FAD-binding PCMH-type domain. Arginine 195 is an active-site residue. Serine 246 (proton donor) is an active-site residue. The active site involves glutamate 316.

It belongs to the MurB family. Requires FAD as cofactor.

Its subcellular location is the cytoplasm. The catalysed reaction is UDP-N-acetyl-alpha-D-muramate + NADP(+) = UDP-N-acetyl-3-O-(1-carboxyvinyl)-alpha-D-glucosamine + NADPH + H(+). It functions in the pathway cell wall biogenesis; peptidoglycan biosynthesis. Functionally, cell wall formation. This chain is UDP-N-acetylenolpyruvoylglucosamine reductase, found in Thiobacillus denitrificans (strain ATCC 25259 / T1).